A 208-amino-acid chain; its full sequence is Protein-L-isoaspartate O-methyltransferase (208 aa).

Serine 59 is an active-site residue.

It belongs to the methyltransferase superfamily. L-isoaspartyl/D-aspartyl protein methyltransferase family.

It localises to the cytoplasm. The catalysed reaction is [protein]-L-isoaspartate + S-adenosyl-L-methionine = [protein]-L-isoaspartate alpha-methyl ester + S-adenosyl-L-homocysteine. Catalyzes the methyl esterification of L-isoaspartyl residues in peptides and proteins that result from spontaneous decomposition of normal L-aspartyl and L-asparaginyl residues. It plays a role in the repair and/or degradation of damaged proteins. The chain is Protein-L-isoaspartate O-methyltransferase from Aliivibrio fischeri (strain ATCC 700601 / ES114) (Vibrio fischeri).